Consider the following 446-residue polypeptide: MGRAYSTIAFDPAKCDGCGDCMTACAQAKTGTDDIARSRIQIYGREGAADKTFELALCRQCADPKCVTVCPAGALNKDGTSGVIGWDATKCVDCLLCTVGCAYAGIALDEATGHVAKCDTCDGNPACVPACPHGALKHITTANIYNEVGDWEDLFAPGLAGCQGCNTELLMRHTLRRVGPDTVLATPPGCVPGMGSVGFNGTTGTKVPVFHPLLTNTAAMLAGIKRQYKRVGRDVQALAIAGDGGASDVGFQSLSGRAERGEQMLFMVVDNEGYMNTGMQRSSCTPYGAWTSTTPVGETSRGKTQDAKNLPLIMVNHRCAYVATASTAYMEDLYDKLDKAIAASKNGFAYLHVYSPCTTAWRFPSNLNMEVARKAVETNFVMLWEYTPQDGLHFTKPVDDPLPVTDYLKAMGRFRHLTPEQVEHIQKKVVENQKFVERMTEHAHVG.

4Fe-4S ferredoxin-type domains follow at residues 6 to 35, 49 to 80, 82 to 111, and 109 to 141; these read STIA…TDDI, ADKT…KDGT, GVIG…LDEA, and DEAT…HITT.

In terms of assembly, dimer of heteropentamers composed of an alpha (PadG), a beta (PadI), a gamma (PadE), a delta (PadF) and an epsilon (PadH) subunit. Requires [4Fe-4S] cluster as cofactor.

It carries out the reaction phenylglyoxylate + NAD(+) + CoA = benzoyl-CoA + CO2 + NADH. With respect to regulation, activated by magnesium ions and thiamine diphosphate. Its function is as follows. Involved in the anaerobic metabolism of phenylalanine and phenylacetate. Catalyzes the oxidative decarboxylation of phenylglyoxylate to benzoyl-CoA and CO(2). It can also react slowly with 2-oxo-3-methylbutanoate and use different electron acceptors such as benzyl viologen, methyl viologen, FAD or FMN, but NAD seems to be the physiological electron acceptor. Also catalyzes an isotope exchange between CO(2) and the carboxyl group which proves partial or complete reversibility of the oxidative decarboxylation reaction. The sequence is that of NADH-dependent phenylglyoxylate dehydrogenase subunit beta (padI) from Aromatoleum evansii (Azoarcus evansii).